A 248-amino-acid polypeptide reads, in one-letter code: Large ribosomal subunit protein uL1 (248 aa).

Belongs to the universal ribosomal protein uL1 family. In terms of assembly, part of the 50S ribosomal subunit.

In terms of biological role, binds directly to 23S rRNA. The L1 stalk is quite mobile in the ribosome, and is involved in E site tRNA release. Its function is as follows. Protein L1 is also a translational repressor protein, it controls the translation of the L11 operon by binding to its mRNA. This Orientia tsutsugamushi (strain Boryong) (Rickettsia tsutsugamushi) protein is Large ribosomal subunit protein uL1.